Here is a 412-residue protein sequence, read N- to C-terminus: Argininosuccinate synthase (412 aa).

ATP contacts are provided by residues 20–28 (AYSGGLDTS) and alanine 48. The L-citrulline site is built by tyrosine 100 and serine 105. Glycine 130 is an ATP binding site. The L-aspartate site is built by threonine 132, asparagine 136, and aspartate 137. Residue asparagine 136 participates in L-citrulline binding. The L-citrulline site is built by arginine 140, serine 189, serine 198, glutamate 274, and tyrosine 286.

This sequence belongs to the argininosuccinate synthase family. Type 1 subfamily. As to quaternary structure, homotetramer.

It is found in the cytoplasm. It carries out the reaction L-citrulline + L-aspartate + ATP = 2-(N(omega)-L-arginino)succinate + AMP + diphosphate + H(+). It functions in the pathway amino-acid biosynthesis; L-arginine biosynthesis; L-arginine from L-ornithine and carbamoyl phosphate: step 2/3. The protein is Argininosuccinate synthase of Shewanella pealeana (strain ATCC 700345 / ANG-SQ1).